The chain runs to 255 residues: MLVMAGLGLYDERDVTLKTLDFAKKVDKIYAEFYTAILTGTTMEKVEETLQKPITVLNREKVEYETNKLIEEAKNKDIMFLTAGDPMVATTHVDIAVEARKKGIEVVIINAPSIYSAIGITGLQLYKFGKTTSVVFPEPNYFPETPYDVIKDNLKLGYHTLCLLDIQADKERFMTANEGLDTLLKIEEKRNEKVISGETYAAVVARAGSTKPGLYYGKIKDLINYDFKSPLHCVIIPGKLHFMEEDALKYLFENI.

S-adenosyl-L-methionine is bound by residues Leu9, Asp85, Val88, Ser113–Ile114, Leu164, Ala207, and His232.

This sequence belongs to the diphthine synthase family. As to quaternary structure, homodimer.

The catalysed reaction is 2-[(3S)-amino-3-carboxypropyl]-L-histidyl-[translation elongation factor 2] + 3 S-adenosyl-L-methionine = diphthine-[translation elongation factor 2] + 3 S-adenosyl-L-homocysteine + 3 H(+). Its pathway is protein modification; peptidyl-diphthamide biosynthesis. Functionally, S-adenosyl-L-methionine-dependent methyltransferase that catalyzes the trimethylation of the amino group of the modified target histidine residue in translation elongation factor 2 (EF-2), to form an intermediate called diphthine. The three successive methylation reactions represent the second step of diphthamide biosynthesis. The chain is Diphthine synthase from Methanococcus maripaludis (strain C6 / ATCC BAA-1332).